The following is a 427-amino-acid chain: Lactadherin (427 aa).

Residues 1-18 (MPCPRLLAALFCSSGLFA) form the signal peptide. EGF-like domains lie at 20 to 59 (SGDF…LLCN) and 62 to 106 (EHGP…IHCE). Disulfide bonds link cysteine 24/cysteine 35, cysteine 29/cysteine 47, and cysteine 49/cysteine 58. The O-linked (Fuc...) serine; in PAS-6 glycan is linked to serine 27. Threonine 34 is a glycosylation site (O-linked (Fuc...) threonine; in PAS-7). N-linked (GlcNAc...) (hybrid) asparagine; in PAS-6 and PAS-7 glycosylation occurs at asparagine 59. 6 cysteine pairs are disulfide-bonded: cysteine 66–cysteine 77, cysteine 71–cysteine 94, cysteine 96–cysteine 105, cysteine 109–cysteine 265, cysteine 252–cysteine 256, and cysteine 270–cysteine 427. Residues 85 to 87 (RGD) carry the Cell attachment site motif. 2 consecutive F5/8 type C domains span residues 109–265 (CTSP…LLGC) and 270–427 (CTEP…LLGC). Asparagine 227 carries an N-linked (GlcNAc...) (high mannose) asparagine; in PAS-6 glycan.

The two O-linked glycans consist of Gal, GlcNAc and Fuc, with probably Fuc as reducing terminal sugar. Milk and spermatozoan. Also present in epididymis, kidney, heart, lymphatic gland and spleen but not esophagus, small intestine, muscle and liver.

The protein localises to the membrane. It is found in the secreted. The protein resides in the cytoplasmic vesicle. It localises to the secretory vesicle. Its subcellular location is the acrosome membrane. Contributes to phagocytic removal of apoptotic cells in many tissues. Plays an important role in the maintenance of intestinal epithelial homeostasis and the promotion of mucosal healing. Promotes VEGF-dependent neovascularization. Specific ligand for the alpha-v/beta-3 and alpha-v/beta-5 receptors. Also binds to phosphatidylserine-enriched cell surfaces in a receptor-independent manner. Zona pellucida-binding protein which may play a role in gamete interaction. In Bos taurus (Bovine), this protein is Lactadherin (MFGE8).